Reading from the N-terminus, the 396-residue chain is NADH-quinone oxidoreductase subunit D (396 aa).

This sequence belongs to the complex I 49 kDa subunit family. As to quaternary structure, NDH-1 is composed of 14 different subunits. Subunits NuoB, C, D, E, F, and G constitute the peripheral sector of the complex.

It localises to the cell inner membrane. The catalysed reaction is a quinone + NADH + 5 H(+)(in) = a quinol + NAD(+) + 4 H(+)(out). Its function is as follows. NDH-1 shuttles electrons from NADH, via FMN and iron-sulfur (Fe-S) centers, to quinones in the respiratory chain. The immediate electron acceptor for the enzyme in this species is believed to be ubiquinone. Couples the redox reaction to proton translocation (for every two electrons transferred, four hydrogen ions are translocated across the cytoplasmic membrane), and thus conserves the redox energy in a proton gradient. The sequence is that of NADH-quinone oxidoreductase subunit D from Brucella suis biovar 1 (strain 1330).